A 118-amino-acid chain; its full sequence is Ribonuclease P protein component (118 aa).

This sequence belongs to the RnpA family. Consists of a catalytic RNA component (M1 or rnpB) and a protein subunit.

The enzyme catalyses Endonucleolytic cleavage of RNA, removing 5'-extranucleotides from tRNA precursor.. Functionally, RNaseP catalyzes the removal of the 5'-leader sequence from pre-tRNA to produce the mature 5'-terminus. It can also cleave other RNA substrates such as 4.5S RNA. The protein component plays an auxiliary but essential role in vivo by binding to the 5'-leader sequence and broadening the substrate specificity of the ribozyme. This chain is Ribonuclease P protein component, found in Desulfatibacillum aliphaticivorans.